Consider the following 599-residue polypeptide: Pheromone-processing carboxypeptidase KEX1 (599 aa).

The signal sequence occupies residues 1–19; it reads MLVRKLTLIGAALARAALA. Residues 20–512 are Lumenal-facing; the sequence is LQQEDFVVNG…LKRLNGDTRK (493 aa). Active-site residues include serine 179 and aspartate 381. Residues asparagine 406 and asparagine 442 are each glycosylated (N-linked (GlcNAc...) asparagine). Histidine 445 is a catalytic residue. Residues 513–533 traverse the membrane as a helical segment; that stretch reads FTIAVFGLTISSIIGVIVYFS. Over 534-599 the chain is Cytoplasmic; it reads MRLHYGAKIR…DISSSELHSV (66 aa).

This sequence belongs to the peptidase S10 family.

It is found in the golgi apparatus. Its subcellular location is the trans-Golgi network membrane. It carries out the reaction Preferential release of a C-terminal arginine or lysine residue.. Protease with a carboxypeptidase B-like function involved in the C-terminal processing of the lysine and arginine residues from protein precursors. Promotes cell fusion and is involved in the programmed cell death. The chain is Pheromone-processing carboxypeptidase KEX1 (KEX1) from Eremothecium gossypii (strain ATCC 10895 / CBS 109.51 / FGSC 9923 / NRRL Y-1056) (Yeast).